The primary structure comprises 303 residues: UDP-N-acetylenolpyruvoylglucosamine reductase (303 aa).

The 167-residue stretch at 30-196 (IGGPADLLII…LEAVFKLKQD (167 aa)) folds into the FAD-binding PCMH-type domain. Residue Arg174 is part of the active site. The Proton donor role is filled by Ser225. Residue Glu295 is part of the active site.

This sequence belongs to the MurB family. FAD is required as a cofactor.

It localises to the cytoplasm. The catalysed reaction is UDP-N-acetyl-alpha-D-muramate + NADP(+) = UDP-N-acetyl-3-O-(1-carboxyvinyl)-alpha-D-glucosamine + NADPH + H(+). Its pathway is cell wall biogenesis; peptidoglycan biosynthesis. Functionally, cell wall formation. The sequence is that of UDP-N-acetylenolpyruvoylglucosamine reductase from Bacillus pumilus (strain SAFR-032).